The primary structure comprises 494 residues: Cytochrome P450 2A13 (494 aa).

Residue Asn-297 participates in substrate binding. Heme is bound at residue Cys-439.

It belongs to the cytochrome P450 family. Requires heme as cofactor. As to expression, expressed in liver and a number of extrahepatic tissues, including nasal mucosa, lung, trachea, brain, mammary gland, prostate, testis, and uterus, but not in heart, kidney, bone marrow, colon, small intestine, spleen, stomach, thymus, or skeletal muscle.

It localises to the endoplasmic reticulum membrane. The protein resides in the microsome membrane. It carries out the reaction an organic molecule + reduced [NADPH--hemoprotein reductase] + O2 = an alcohol + oxidized [NADPH--hemoprotein reductase] + H2O + H(+). In terms of biological role, exhibits a coumarin 7-hydroxylase activity. Active in the metabolic activation of hexamethylphosphoramide, N,N-dimethylaniline, 2'-methoxyacetophenone, N-nitrosomethylphenylamine, and the tobacco-specific carcinogen, 4-(methylnitrosamino)-1-(3-pyridyl)-1-butanone. Possesses phenacetin O-deethylation activity. In Homo sapiens (Human), this protein is Cytochrome P450 2A13 (CYP2A13).